A 244-amino-acid polypeptide reads, in one-letter code: LexA repressor (244 aa).

The tract at residues 1–24 is disordered; that stretch reads MSDSSDTTVDGASDGASDGASGAD. A compositionally biased stretch (low complexity) spans 10-24; sequence DGASDGASDGASGAD. A DNA-binding region (H-T-H motif) is located at residues 58-78; sequence IREIGDAVGLTSTSSVAHQLR. Active-site for autocatalytic cleavage activity residues include Ser168 and Lys205.

It belongs to the peptidase S24 family. In terms of assembly, homodimer.

The enzyme catalyses Hydrolysis of Ala-|-Gly bond in repressor LexA.. Represses a number of genes involved in the response to DNA damage (SOS response), including recA and lexA. In the presence of single-stranded DNA, RecA interacts with LexA causing an autocatalytic cleavage which disrupts the DNA-binding part of LexA, leading to derepression of the SOS regulon and eventually DNA repair. In Mycobacterium marinum (strain ATCC BAA-535 / M), this protein is LexA repressor.